An 89-amino-acid polypeptide reads, in one-letter code: Small ribosomal subunit protein uS15 (89 aa).

The tract at residues Met-1 to Gly-23 is disordered.

This sequence belongs to the universal ribosomal protein uS15 family. Part of the 30S ribosomal subunit. Forms a bridge to the 50S subunit in the 70S ribosome, contacting the 23S rRNA.

In terms of biological role, one of the primary rRNA binding proteins, it binds directly to 16S rRNA where it helps nucleate assembly of the platform of the 30S subunit by binding and bridging several RNA helices of the 16S rRNA. Functionally, forms an intersubunit bridge (bridge B4) with the 23S rRNA of the 50S subunit in the ribosome. The protein is Small ribosomal subunit protein uS15 of Treponema pallidum (strain Nichols).